We begin with the raw amino-acid sequence, 347 residues long: Phenylalanine--tRNA ligase alpha subunit (347 aa).

E261 is a Mg(2+) binding site.

The protein belongs to the class-II aminoacyl-tRNA synthetase family. Phe-tRNA synthetase alpha subunit type 1 subfamily. As to quaternary structure, tetramer of two alpha and two beta subunits. The cofactor is Mg(2+).

It localises to the cytoplasm. It carries out the reaction tRNA(Phe) + L-phenylalanine + ATP = L-phenylalanyl-tRNA(Phe) + AMP + diphosphate + H(+). The polypeptide is Phenylalanine--tRNA ligase alpha subunit (Streptococcus equi subsp. zooepidemicus (strain MGCS10565)).